The chain runs to 641 residues: WW domain-binding protein 11 (641 aa).

Polar residues predominate over residues 1 to 11 (MGRRSTSSTKS). Residues 1-37 (MGRRSTSSTKSGKFMNPTDQARKEARKRELKKNKKQR) form a disordered region. The tract at residues 1–45 (MGRRSTSSTKSGKFMNPTDQARKEARKRELKKNKKQRMMVRAAVL) is required for nuclear import. The residue at position 13 (Lys-13) is an N6-acetyllysine. Residues 28–37 (RELKKNKKQR) show a composition bias toward basic residues. A coiled-coil region spans residues 75–133 (EKVLKDKRKKLRETFERILRLYEKENPDIYKELRKLEVEYEQKRAQLSQYFDAVKNAQH). Ser-181 is subject to Phosphoserine. A disordered region spans residues 186–213 (LGHGVPRLPPGRKPPGPPPGPPPPQVVQ). Arg-192 is modified (omega-N-methylarginine). Positions 192-210 (RLPPGRKPPGPPPGPPPPQ) are enriched in pro residues. The interval 217–221 (RKVGF) is interaction with PP1. At Tyr-236 the chain carries Phosphotyrosine. The segment at 236–552 (YSPELAQRGH…RPKADDTSAA (317 aa)) is disordered. The residue at position 237 (Ser-237) is a Phosphoserine. Acidic residues predominate over residues 253–263 (SEDDGYPEDMD). Over residues 276–304 (TDKSDGESDGDEFVHRDNGERDNNEEKKS) the composition is skewed to basic and acidic residues. 2 positions are modified to phosphoserine: Ser-279 and Ser-283. The interaction with PP1 stretch occupies residues 306 to 310 (LSVRF). Over residues 351–365 (EFSEDDDEDDSDDSE) the composition is skewed to acidic residues. A phosphoserine mark is found at Ser-353, Ser-361, and Ser-364. Basic and acidic residues predominate over residues 366 to 380 (AEKQSQKQHKEESHS). The segment covering 386–404 (ASSQQQAPPQSVPPSQIQA) has biased composition (low complexity). Pro residues-rich tracts occupy residues 405-447 (PPMP…PPGM), 456-504 (RLLP…PPRP), and 510-530 (PLVP…PLPN). Residues 455 to 466 (PRLLPPGPPPGR) carry the PGR motif. Residue Lys-557 forms a Glycyl lysine isopeptide (Lys-Gly) (interchain with G-Cter in SUMO2) linkage. An N6-acetyllysine modification is found at Lys-565. Lys-572 participates in a covalent cross-link: Glycyl lysine isopeptide (Lys-Gly) (interchain with G-Cter in SUMO2). The segment at 587–623 (RENKGATAAPQRKSEDDSAVPLAKAAPKSGPSVPVSV) is disordered. Position 600 is a phosphoserine (Ser-600).

Interacts with PPP1CA, PPP1CB and PPP1CC. Interacts via the PGR motif with PQBP1 in the nucleus. Interacts with the WW domains of WBP4. In terms of tissue distribution, ubiquitous. Highly expressed in the heart, pancreas, kidney skeletal muscle, placenta and brain (at protein level). Weakly expressed in liver and lung.

It is found in the nucleus. The protein resides in the cytoplasm. Activates pre-mRNA splicing. May inhibit PP1 phosphatase activity. The sequence is that of WW domain-binding protein 11 from Homo sapiens (Human).